Reading from the N-terminus, the 543-residue chain is Reticulophagy regulator 2 (543 aa).

The next 3 helical transmembrane spans lie at 12–32 (AGGG…SLGM), 100–120 (SLRP…LDLW), and 204–224 (VPGI…PLVV). The span at 254–265 (LHHKHDKRKRQG) shows a compositional bias: basic residues. The tract at residues 254–287 (LHHKHDKRKRQGKNAPPGGDEPLAETESESEAEL) is disordered. Over residues 275–285 (PLAETESESEA) the composition is skewed to acidic residues. The residue at position 279 (Thr-279) is a Phosphothreonine. Residues Ser-281, Ser-283, Ser-291, and Ser-311 each carry the phosphoserine modification. Thr-334 bears the Phosphothreonine mark. Disordered regions lie at residues 336 to 394 (VSED…DVAA) and 411 to 486 (HFNG…EEEA). Residues Ser-337, Ser-344, Ser-347, and Ser-385 each carry the phosphoserine modification. The segment covering 461–480 (APSPSILPPVPQDSPQPLPA) has biased composition (pro residues). The LIR motif motif lies at 490 to 495 (EDFELL). The disordered stretch occupies residues 504 to 543 (NAELGLEPETPPKPPDAPPLGPDIHSLVQSDQEAQAVAEP). Residues 512-524 (ETPPKPPDAPPLG) are compositionally biased toward pro residues.

It belongs to the RETREG family. Interacts with ATG8 family modifier proteins MAP1LC3A, MAP1LC3B, MAP1LC3C, GABARAP, GABARAPL1 and GABARAPL2. Shows higher affinity for GABARAPL1 than for MAP1LC3B. Interacts with CANX.

It localises to the endoplasmic reticulum membrane. In terms of biological role, endoplasmic reticulum (ER)-anchored autophagy regulator which exists in an inactive state under basal conditions but is activated following cellular stress. When activated, induces ER fragmentation and mediates ER delivery into lysosomes through sequestration into autophagosomes via interaction with ATG8 family proteins. Required for collagen quality control in a LIR motif-independent manner. This chain is Reticulophagy regulator 2, found in Homo sapiens (Human).